The sequence spans 336 residues: Type II methyltransferase M2.HphI (336 aa).

It belongs to the N(4)/N(6)-methyltransferase family.

It catalyses the reaction a 2'-deoxyadenosine in DNA + S-adenosyl-L-methionine = an N(6)-methyl-2'-deoxyadenosine in DNA + S-adenosyl-L-homocysteine + H(+). An alpha subtype methylase that recognizes the double-stranded sequence 5'-GGTGA-3', probably methylates A-5 on the top strand, and protects the DNA from cleavage by the HphI endonuclease. In Haemophilus parahaemolyticus, this protein is Type II methyltransferase M2.HphI (hphIBM).